Consider the following 196-residue polypeptide: Small ribosomal subunit protein uS4c (196 aa).

Residues 89 to 157 (MRLDNILFRL…VQNYIASSDP (69 aa)) enclose the S4 RNA-binding domain.

This sequence belongs to the universal ribosomal protein uS4 family. In terms of assembly, part of the 30S ribosomal subunit. Contacts protein S5. The interaction surface between S4 and S5 is involved in control of translational fidelity.

The protein resides in the plastid. It localises to the chloroplast. Functionally, one of the primary rRNA binding proteins, it binds directly to 16S rRNA where it nucleates assembly of the body of the 30S subunit. Its function is as follows. With S5 and S12 plays an important role in translational accuracy. The sequence is that of Small ribosomal subunit protein uS4c (rps4) from Elymus canadensis (Canada wild rye).